The chain runs to 1245 residues: Structural polyprotein (1245 aa).

Residues 1–106 (MNRGFFNMLG…KPKPGKRQRM (106 aa)) are disordered. A host transcription inhibition region spans residues 37-70 (GLASQIQQLTTAVSALVIGQATRPQPPRPRPPPR). Polar residues predominate over residues 38-49 (LASQIQQLTTAV). Positions 63–100 (PRPRPPPRQKKQAPKQPPKPKKPKTQEKKKKQPAKPKP) match the Nuclear localization signal motif. Residues 67 to 106 (PPPRQKKQAPKQPPKPKKPKTQEKKKKQPAKPKPGKRQRM) show a composition bias toward basic residues. A binding to the viral RNA region spans residues 86-115 (KTQEKKKKQPAKPKPGKRQRMALKLEADRL). A ribosome-binding region spans residues 100 to 114 (PGKRQRMALKLEADR). Positions 114 to 264 (RLFDVKNEDG…KTTPEGTEEW (151 aa)) constitute a Peptidase S3 domain. The active-site Charge relay system is H141. The Nuclear export signal signature appears at 146–156 (IDHPVLSKLKF). The tract at residues 157 to 162 (TKSSAY) is interaction with spike glycoprotein E2. D163 acts as the Charge relay system in catalysis. Residues 185–195 (PEGFYNWHHGA) are dimerization of the capsid protein. S215 serves as the catalytic Charge relay system. The interval 221-225 (DNSGR) is dimerization of the capsid protein. Residues 249–253 (SKGKT) form an interaction with spike glycoprotein E2 region. The tract at residues 265–279 (SAAPLVTAMCLLGNV) is functions as an uncleaved signal peptide for the precursor of protein E3/E2. N-linked (GlcNAc...) asparagine; by host glycosylation occurs at N278. 4 disulfides stabilise this stretch: C283/C289, C480/C594, C529/C554, and C531/C548. The Extracellular portion of the chain corresponds to 329–690 (SVIDDFTLTS…HEIVQHYYHR (362 aa)). N524 carries N-linked (GlcNAc...) asparagine; by host glycosylation. Residue N646 is glycosylated (N-linked (GlcNAc...) asparagine; by host). Positions 682-730 (EIVQHYYHRHPVYTILAVASATVAMMIGVTVAVLCACKARRECLTPYAL) form a coiled coil. The helical transmembrane segment at 691–718 (HPVYTILAVASATVAMMIGVTVAVLCAC) threads the bilayer. Residues 719–723 (KARRE) are interaction with the capsid protein. At 719–751 (KARRECLTPYALAPNAVIPTSLALLCCVRSANA) the chain is on the cytoplasmic side. S-palmitoyl cysteine; by host attachment occurs at residues C724, C744, and C745. An intrachain disulfide couples C724 to C745. The Extracellular segment spans residues 752-763 (ETFTETMSYLWS). The chain crosses the membrane as a helical span at residues 764-784 (NSQPFFWVQLCIPLAAFIVLM). A topological domain (cytoplasmic) is located at residue R785. A helical transmembrane segment spans residues 786–806 (CCSCCLPFLVVAGAYLAKVDA). The Extracellular segment spans residues 807 to 1214 (YEHATTVPNV…QAAISKTSWS (408 aa)). 4 disulfide bridges follow: C855/C920, C868/C900, C869/C902, and C874/C884. The E1 fusion peptide loop stretch occupies residues 890–907 (VYPFMWGGAQCFCDSENS). Residues N945 and N1051 are each glycosylated (N-linked (GlcNAc...) asparagine; by host). 4 disulfides stabilise this stretch: C1065-C1077, C1107-C1182, C1112-C1186, and C1134-C1176. Residues 1196–1245 (TPHKNDQEFQAAISKTSWSWLFALFGGASSLLIIGLMIFACSMMLTSTRR) are a coiled coil. Residues 1215 to 1239 (WLFALFGGASSLLIIGLMIFACSMM) traverse the membrane as a helical segment. Residues 1240–1245 (LTSTRR) lie on the Cytoplasmic side of the membrane.

Belongs to the alphavirus structural polyprotein family. In terms of assembly, homomultimer. Interacts with host karyopherin KPNA4; this interaction allows the nuclear import of the viral capsid protein. Interacts with spike glycoprotein E2. Interacts with host IRAK1; the interaction leads to inhibition of IRAK1-dependent signaling. As to quaternary structure, the precursor of protein E3/E2 and E1 form a heterodimer shortly after synthesis. The precursor of protein E3/E2 and E1 form a heterodimer shortly after synthesis. Processing of the precursor of protein E3/E2 into E2 and E3 results in a heterodimer of the spike glycoproteins E2 and E1. Spike at virion surface are constituted of a trimer of E2-E1 heterodimers. After target cell attachment and endocytosis, E1 change conformation to form homotrimers. E2-E1 heterodimers interact with host VLDLR or LRP8/APOER2 to mediate viral entry. Interacts with 6K protein. In terms of assembly, interacts with spike glycoprotein E1. Processing of the precursor of protein E3/E2 into E2 and E3 results in a heterodimer of the spike glycoproteins E2 and E1. Spike at virion surface are constituted of a trimer of E2-E1 heterodimers. E2-E1 heterodimers interact with host VLDLR or LRP8/APOER2 to mediate viral entry. Interacts with 6K protein. Interacts with the capsid protein. As to quaternary structure, oligomer. Interacts with spike glycoprotein E1. Interacts with spike glycoprotein E2. Specific enzymatic cleavages in vivo yield mature proteins. Capsid protein is auto-cleaved during polyprotein translation, unmasking a signal peptide at the N-terminus of the precursor of E3/E2. The remaining polyprotein is then targeted to the host endoplasmic reticulum, where host signal peptidase cleaves it into pE2, 6K and E1 proteins. pE2 is further processed to mature E3 and E2 by host furin in trans-Golgi vesicle. In terms of processing, palmitoylated via thioester bonds. These palmitoylations may induce disruption of the C-terminus transmembrane. This would result in the reorientation of E2 C-terminus from lumenal to cytoplasmic side. Post-translationally, N-glycosylated. Palmitoylated via thioester bonds.

The protein localises to the virion. It is found in the host cytoplasm. The protein resides in the host cell membrane. It localises to the host nucleus. Its subcellular location is the virion membrane. The protein localises to the host Golgi apparatus. It is found in the host trans-Golgi network. The protein resides in the host endoplasmic reticulum. The enzyme catalyses Autocatalytic release of the core protein from the N-terminus of the togavirus structural polyprotein by hydrolysis of a -Trp-|-Ser- bond.. Its activity is regulated as follows. The channel activity is blocked by 5-N, N-Hexamethylene amiloride. Functionally, forms an icosahedral capsid with a T=4 symmetry composed of 240 copies of the capsid protein surrounded by a lipid membrane through which penetrate 80 spikes composed of trimers of E1-E2 heterodimers. The capsid protein binds to the viral RNA genome at a site adjacent to a ribosome binding site for viral genome translation following genome release. Possesses a protease activity that results in its autocatalytic cleavage from the nascent structural protein. Following its self-cleavage, the capsid protein transiently associates with ribosomes, and within several minutes the protein binds to viral RNA and rapidly assembles into icosahedric core particles. The resulting nucleocapsid eventually associates with the cytoplasmic domain of the spike glycoprotein E2 at the cell membrane, leading to budding and formation of mature virions. In case of infection, new virions attach to target cells and after clathrin-mediated endocytosis their membrane fuses with the host endosomal membrane. This leads to the release of the nucleocapsid into the cytoplasm, followed by an uncoating event necessary for the genomic RNA to become accessible. The uncoating might be triggered by the interaction of capsid proteins with ribosomes. Binding of ribosomes would release the genomic RNA since the same region is genomic RNA-binding and ribosome-binding. Specifically inhibits interleukin-1 receptor-associated kinase 1/IRAK1-dependent signaling during viral entry, representing a means by which the alphaviruses may evade innate immune detection and activation prior to viral gene expression. Its function is as follows. Provides the signal sequence for the translocation of the precursor of protein E3/E2 to the host endoplasmic reticulum. Furin-cleaved E3 remains associated with spike glycoprotein E1 and mediates pH protection of the latter during the transport via the secretory pathway. After virion release from the host cell, the assembly protein E3 is gradually released in the extracellular space. Plays a role in viral attachment to target host cell, by binding to the cell receptors VLDLR or LRP8/APOER2. Synthesized as a pE2 precursor which is processed by furin at the cell membrane just before virion budding, giving rise to E2-E1 heterodimer. The pE2-E1 heterodimer is stable, whereas E2-E1 is unstable and dissociate at low pH. pE2 is processed at the last step, presumably to avoid E1 fusion activation before its final export to cell surface. E2 C-terminus contains a transitory transmembrane that would be disrupted by palmitoylation, resulting in reorientation of the C-terminal tail from lumenal to cytoplasmic side. This step is critical since E2 C-terminus is involved in budding by interacting with capsid proteins. This release of E2 C-terminus in cytoplasm occurs lately in protein export, and precludes premature assembly of particles at the endoplasmic reticulum membrane. In terms of biological role, acts as a viroporin that participates in virus glycoprotein processing and transport to the plasma membrane, cell permeabilization and budding of viral particles. Disrupts the calcium homeostasis of the cell, probably at the endoplasmic reticulum level resulting in the increased levels of cytoplasmic calcium. Because of its lipophilic properties, the 6K protein is postulated to influence the selection of lipids that interact with the transmembrane domains of the glycoproteins, which, in turn, affects the deformability of the bilayer required for the extreme curvature that occurs as budding proceeds. Present in low amount in virions, about 3% compared to viral glycoproteins. Functionally, class II viral fusion protein. Fusion activity is inactive as long as E1 is bound to E2 in mature virion. After virus attachment to target cell via host VLDLR or LRP8/APOER2 and endocytosis, acidification of the endosome induces dissociation of E1/E2 heterodimer and concomitant trimerization of the E1 subunits. This E1 trimer is fusion active, and promotes release of viral nucleocapsid in cytoplasm after endosome and viral membrane fusion. Efficient fusion requires the presence of cholesterol and sphingolipid in the target membrane. In Acrocephalus scirpaceus (Eurasian reed-warbler), this protein is Structural polyprotein.